We begin with the raw amino-acid sequence, 226 residues long: Ribonuclease 3 (226 aa).

One can recognise an RNase III domain in the interval 7–134 (KQNLKKKYGI…FNGALFLDQG (128 aa)). Glutamate 47 serves as a coordination point for Mg(2+). The active site involves aspartate 51. Mg(2+)-binding residues include aspartate 120 and glutamate 123. The active site involves glutamate 123. In terms of domain architecture, DRBM spans 160–226 (DYKTELQERL…AAQAALDKNK (67 aa)). The disordered stretch occupies residues 201-226 (KVSEGQGRNKKAAEQQAAQAALDKNK). Residues 214 to 226 (EQQAAQAALDKNK) show a composition bias toward low complexity.

The protein belongs to the ribonuclease III family. In terms of assembly, homodimer. Mg(2+) is required as a cofactor.

Its subcellular location is the cytoplasm. The enzyme catalyses Endonucleolytic cleavage to 5'-phosphomonoester.. Its function is as follows. Digests double-stranded RNA. Involved in the processing of primary rRNA transcript to yield the immediate precursors to the large and small rRNAs (23S and 16S). Processes some mRNAs, and tRNAs when they are encoded in the rRNA operon. Processes pre-crRNA and tracrRNA of type II CRISPR loci if present in the organism. The sequence is that of Ribonuclease 3 from Lactobacillus johnsonii (strain CNCM I-12250 / La1 / NCC 533).